Here is a 429-residue protein sequence, read N- to C-terminus: Saccharopine dehydrogenase-like oxidoreductase (429 aa).

At Ala-2 the chain carries N-acetylalanine. Ser-209, Ser-215, and Ser-217 each carry phosphoserine.

The protein belongs to the saccharopine dehydrogenase family.

This Mus musculus (Mouse) protein is Saccharopine dehydrogenase-like oxidoreductase (Sccpdh).